The primary structure comprises 468 residues: Uronate isomerase (468 aa).

This sequence belongs to the metallo-dependent hydrolases superfamily. Uronate isomerase family.

It catalyses the reaction D-glucuronate = D-fructuronate. The catalysed reaction is aldehydo-D-galacturonate = keto-D-tagaturonate. It participates in carbohydrate metabolism; pentose and glucuronate interconversion. The polypeptide is Uronate isomerase (Endomicrobium trichonymphae).